Reading from the N-terminus, the 103-residue chain is Pyrimidine/purine nucleoside phosphorylase (103 aa).

It belongs to the nucleoside phosphorylase PpnP family.

The enzyme catalyses a purine D-ribonucleoside + phosphate = a purine nucleobase + alpha-D-ribose 1-phosphate. It carries out the reaction adenosine + phosphate = alpha-D-ribose 1-phosphate + adenine. The catalysed reaction is cytidine + phosphate = cytosine + alpha-D-ribose 1-phosphate. It catalyses the reaction guanosine + phosphate = alpha-D-ribose 1-phosphate + guanine. The enzyme catalyses inosine + phosphate = alpha-D-ribose 1-phosphate + hypoxanthine. It carries out the reaction thymidine + phosphate = 2-deoxy-alpha-D-ribose 1-phosphate + thymine. The catalysed reaction is uridine + phosphate = alpha-D-ribose 1-phosphate + uracil. It catalyses the reaction xanthosine + phosphate = alpha-D-ribose 1-phosphate + xanthine. In terms of biological role, catalyzes the phosphorolysis of diverse nucleosides, yielding D-ribose 1-phosphate and the respective free bases. Can use uridine, adenosine, guanosine, cytidine, thymidine, inosine and xanthosine as substrates. Also catalyzes the reverse reactions. This chain is Pyrimidine/purine nucleoside phosphorylase, found in Shewanella frigidimarina (strain NCIMB 400).